The following is a 572-amino-acid chain: Phosphoenolpyruvate-protein phosphotransferase (572 aa).

H191 functions as the Tele-phosphohistidine intermediate in the catalytic mechanism. Residues R298 and R334 each contribute to the phosphoenolpyruvate site. Positions 433 and 457 each coordinate Mg(2+). Phosphoenolpyruvate is bound by residues 456-457 and R467; that span reads ND. The active-site Proton donor is C504.

This sequence belongs to the PEP-utilizing enzyme family. In terms of assembly, homodimer. Mg(2+) is required as a cofactor.

Its subcellular location is the cytoplasm. The catalysed reaction is L-histidyl-[protein] + phosphoenolpyruvate = N(pros)-phospho-L-histidyl-[protein] + pyruvate. General (non sugar-specific) component of the phosphoenolpyruvate-dependent sugar phosphotransferase system (sugar PTS). This major carbohydrate active-transport system catalyzes the phosphorylation of incoming sugar substrates concomitantly with their translocation across the cell membrane. Enzyme I transfers the phosphoryl group from phosphoenolpyruvate (PEP) to the phosphoryl carrier protein (HPr). The sequence is that of Phosphoenolpyruvate-protein phosphotransferase (ptsI) from Staphylococcus epidermidis (strain ATCC 35984 / DSM 28319 / BCRC 17069 / CCUG 31568 / BM 3577 / RP62A).